The following is a 289-amino-acid chain: Enoyl-CoA delta isomerase 1, mitochondrial (289 aa).

The N-terminal 28 residues, 1–28, are a transit peptide targeting the mitochondrion; sequence MALAAARRVLLQAGSRLGRRGAVDGARR. An N6-acetyllysine; alternate modification is found at Lys48. Lys48 carries the N6-succinyllysine; alternate modification. Position 71 is an N6-succinyllysine (Lys71). N6-acetyllysine is present on Lys76. Substrate-binding positions include 93–97, Gly140, and Asn164; that span reads AGLDL. Lys222, Lys229, and Lys255 each carry N6-acetyllysine; alternate. N6-succinyllysine; alternate is present on residues Lys222, Lys229, and Lys255. At Lys275 the chain carries N6-succinyllysine. Lys283 carries the N6-acetyllysine; alternate modification. The residue at position 283 (Lys283) is an N6-succinyllysine; alternate.

This sequence belongs to the enoyl-CoA hydratase/isomerase family. In terms of assembly, homotrimer.

The protein localises to the mitochondrion matrix. The enzyme catalyses a (3Z)-enoyl-CoA = a 4-saturated (2E)-enoyl-CoA. It carries out the reaction a (3E)-enoyl-CoA = a 4-saturated (2E)-enoyl-CoA. It catalyses the reaction (3Z)-octenoyl-CoA = (2E)-octenoyl-CoA. The catalysed reaction is (2E)-tetradecenoyl-CoA = (3Z)-tetradecenoyl-CoA. The enzyme catalyses (3Z)-dodecenoyl-CoA = (2E)-dodecenoyl-CoA. It carries out the reaction (3Z)-hexenoyl-CoA = (2E)-hexenoyl-CoA. It catalyses the reaction (3Z)-decenoyl-CoA = (2E)-decenoyl-CoA. The protein operates within lipid metabolism; fatty acid beta-oxidation. Its function is as follows. Key enzyme of fatty acid beta-oxidation. Able to isomerize both 3-cis (3Z) and 3-trans (3E) double bonds into the 2-trans (2E) form in a range of enoyl-CoA species, with a preference for (3Z)-enoyl-CoAs over (3E)-enoyl-CoAs. The catalytic efficiency of this enzyme is not affected by the fatty acyl chain length. This Rattus norvegicus (Rat) protein is Enoyl-CoA delta isomerase 1, mitochondrial.